The sequence spans 117 residues: MSGEVSYYAGQTAEEAVARIYDRSGRPVAARRWRGVSGEIDLIAREGAEVIFIEVKKSKSHAAAAARLSRRQMDRIYGAASEFLAGEPRGQLTASRFDVALVDALGRVEIIENAFAA.

It belongs to the UPF0102 family.

This chain is UPF0102 protein Rsph17029_0461, found in Cereibacter sphaeroides (strain ATCC 17029 / ATH 2.4.9) (Rhodobacter sphaeroides).